A 142-amino-acid polypeptide reads, in one-letter code: MAKKVTGYLKLQVPAGAANPSPPIGPALGQRGLNIMEFCKNFNAQTQKEEKNTPIPVVITIYADRSFTFEMKTPPMSFFLKQAAKIQSGSKLPGRDVAGKVSSAQVREIAERKMKDLNCDSIESAMRMVEGSARSMGLQVEG.

The protein belongs to the universal ribosomal protein uL11 family. As to quaternary structure, part of the ribosomal stalk of the 50S ribosomal subunit. Interacts with L10 and the large rRNA to form the base of the stalk. L10 forms an elongated spine to which L12 dimers bind in a sequential fashion forming a multimeric L10(L12)X complex. In terms of processing, one or more lysine residues are methylated.

Its function is as follows. Forms part of the ribosomal stalk which helps the ribosome interact with GTP-bound translation factors. This Rhodopseudomonas palustris (strain BisA53) protein is Large ribosomal subunit protein uL11.